We begin with the raw amino-acid sequence, 661 residues long: UvrABC system protein B (661 aa).

Residues 26–413 enclose the Helicase ATP-binding domain; the sequence is KGIQEGKKHQ…TDEMVEQIIR (388 aa). ATP is bound at residue 39–46; the sequence is GATGTGKT. Positions 92–115 match the Beta-hairpin motif; that stretch reads YYDYYQPEAYVPQTDTFIEKDASI. Residues 430 to 596 form the Helicase C-terminal domain; it reads QIDDLIGEIQ…TINKEIRDVI (167 aa). The UVR domain occupies 625 to 660; it reads QKVVEQMEHEMKEAAKALDFERAAELRDLLLELKAE.

The protein belongs to the UvrB family. Forms a heterotetramer with UvrA during the search for lesions. Interacts with UvrC in an incision complex.

It is found in the cytoplasm. Functionally, the UvrABC repair system catalyzes the recognition and processing of DNA lesions. A damage recognition complex composed of 2 UvrA and 2 UvrB subunits scans DNA for abnormalities. Upon binding of the UvrA(2)B(2) complex to a putative damaged site, the DNA wraps around one UvrB monomer. DNA wrap is dependent on ATP binding by UvrB and probably causes local melting of the DNA helix, facilitating insertion of UvrB beta-hairpin between the DNA strands. Then UvrB probes one DNA strand for the presence of a lesion. If a lesion is found the UvrA subunits dissociate and the UvrB-DNA preincision complex is formed. This complex is subsequently bound by UvrC and the second UvrB is released. If no lesion is found, the DNA wraps around the other UvrB subunit that will check the other stand for damage. In Bacillus subtilis (strain 168), this protein is UvrABC system protein B.